Here is a 439-residue protein sequence, read N- to C-terminus: Serine/threonine-protein kinase 2 (439 aa).

The 353-residue stretch at 87–439 (NDDFYHISTG…IFSDWINGGN (353 aa)) folds into the Protein kinase domain. ATP-binding positions include 93–101 (ISTGGYGIV) and Lys117. The active-site Proton acceptor is Asp307.

The protein belongs to the protein kinase superfamily. Ser/Thr protein kinase family. Post-translationally, phosphorylated in vivo. Autophosphorylated in vitro.

It localises to the host endoplasmic reticulum. Its subcellular location is the host endoplasmic reticulum-Golgi intermediate compartment. It catalyses the reaction L-seryl-[protein] + ATP = O-phospho-L-seryl-[protein] + ADP + H(+). It carries out the reaction L-threonyl-[protein] + ATP = O-phospho-L-threonyl-[protein] + ADP + H(+). In terms of biological role, essential serine-protein kinase involved in the early stage of virion morphogenesis. The protein is Serine/threonine-protein kinase 2 (OPG054) of Vaccinia virus (strain Tian Tan) (VACV).